The sequence spans 447 residues: Methylenetetrahydrofolate--tRNA-(uracil-5-)-methyltransferase TrmFO (447 aa).

Residue 9–14 (GGGLAG) coordinates FAD.

The protein belongs to the MnmG family. TrmFO subfamily. FAD serves as cofactor.

The protein localises to the cytoplasm. It carries out the reaction uridine(54) in tRNA + (6R)-5,10-methylene-5,6,7,8-tetrahydrofolate + NADH + H(+) = 5-methyluridine(54) in tRNA + (6S)-5,6,7,8-tetrahydrofolate + NAD(+). The catalysed reaction is uridine(54) in tRNA + (6R)-5,10-methylene-5,6,7,8-tetrahydrofolate + NADPH + H(+) = 5-methyluridine(54) in tRNA + (6S)-5,6,7,8-tetrahydrofolate + NADP(+). Its function is as follows. Catalyzes the folate-dependent formation of 5-methyl-uridine at position 54 (M-5-U54) in all tRNAs. This Paramagnetospirillum magneticum (strain ATCC 700264 / AMB-1) (Magnetospirillum magneticum) protein is Methylenetetrahydrofolate--tRNA-(uracil-5-)-methyltransferase TrmFO.